Consider the following 419-residue polypeptide: Creatine kinase S-type, mitochondrial (419 aa).

The transit peptide at 1–39 directs the protein to the mitochondrion; sequence MASAFSKLLTGRNASLLFTTLGTSALTTGYLLNRQKVSA. The tract at residues 40 to 64 is cardiolipin-binding; sequence DAREQHKLFPPSADYPDLRKHNNCM. Residues 46 to 132 form the Phosphagen kinase N-terminal domain; the sequence is KLFPPSADYP…FDPVIKLRHN (87 aa). The region spanning 159–401 is the Phosphagen kinase C-terminal domain; the sequence is YVLSSRVRTG…NYLVDCEKKL (243 aa). Residues 162–166 and histidine 225 contribute to the ATP site; that span reads SSRVR. Residue tyrosine 255 is modified to Phosphotyrosine. Residues arginine 270, arginine 326, 354-359, and aspartate 369 each bind ATP; that span reads RGTGGV. A Phosphothreonine modification is found at threonine 356.

It belongs to the ATP:guanido phosphotransferase family. In terms of assembly, exists as an octamer composed of four CKMT2 homodimers. In terms of tissue distribution, sarcomere-specific. Found only in heart and skeletal muscles.

The protein resides in the mitochondrion inner membrane. The catalysed reaction is creatine + ATP = N-phosphocreatine + ADP + H(+). Its function is as follows. Reversibly catalyzes the transfer of phosphate between ATP and various phosphogens (e.g. creatine phosphate). Creatine kinase isoenzymes play a central role in energy transduction in tissues with large, fluctuating energy demands, such as skeletal muscle, heart, brain and spermatozoa. In Rattus norvegicus (Rat), this protein is Creatine kinase S-type, mitochondrial (Ckmt2).